A 360-amino-acid polypeptide reads, in one-letter code: Phospho-N-acetylmuramoyl-pentapeptide-transferase (360 aa).

Residues 1–25 (MLVWLAEHLVKYYSGFNVFSYLTFR) are Periplasmic-facing. The chain crosses the membrane as a helical span at residues 26 to 46 (AIVSLLTALFISLWMGPRMIA). The Cytoplasmic portion of the chain corresponds to 47 to 71 (RLQKLSFGQVVRNDGPESHFSKRGT). The chain crosses the membrane as a helical span at residues 72 to 92 (PTMGGIMILTAIVISVLLWAY). A topological domain (periplasmic) is located at residue Pro93. Residues 94–114 (SNPYVWCVLVVLIGYGIIGFV) form a helical membrane-spanning segment. The Cytoplasmic portion of the chain corresponds to 115-131 (DDYRKVVRKDTKGLIAR). Residues 132–152 (WKYFWMSVIALGVAFALYLVG) form a helical membrane-spanning segment. At 153–167 (KDTPATQLVVPFFKD) the chain is on the periplasmic side. A helical membrane pass occupies residues 168 to 188 (VMPQLGLFYILLSYFVIVGTG). The Cytoplasmic segment spans residues 189–198 (NAVNLTDGLD). The chain crosses the membrane as a helical span at residues 199–219 (GLAIMPTVFVAAGFALVAWAT). The Periplasmic segment spans residues 220–235 (GNMNFANYLHIPYLRH). The chain crosses the membrane as a helical span at residues 236–256 (AGELVIVCTAIVGAGLGFLWF). Over 257–262 (NTYPAQ) the chain is Cytoplasmic. Residues 263 to 283 (VFMGDVGSLALGGALGIIAVL) form a helical membrane-spanning segment. The Periplasmic segment spans residues 284–287 (LRQE). The helical transmembrane segment at 288–308 (FLLVIMGGVFVVETLSVILQV) threads the bilayer. Over 309–337 (GSFKLRGQRIFRMAPIHHHYELKGWPEPR) the chain is Cytoplasmic. Residues 338–358 (VIVRFWIISLMLVLIGLATLK) form a helical membrane-spanning segment. Residues 359-360 (VR) lie on the Periplasmic side of the membrane.

Belongs to the glycosyltransferase 4 family. MraY subfamily. It depends on Mg(2+) as a cofactor.

The protein resides in the cell inner membrane. The enzyme catalyses UDP-N-acetyl-alpha-D-muramoyl-L-alanyl-gamma-D-glutamyl-meso-2,6-diaminopimeloyl-D-alanyl-D-alanine + di-trans,octa-cis-undecaprenyl phosphate = di-trans,octa-cis-undecaprenyl diphospho-N-acetyl-alpha-D-muramoyl-L-alanyl-D-glutamyl-meso-2,6-diaminopimeloyl-D-alanyl-D-alanine + UMP. It participates in cell wall biogenesis; peptidoglycan biosynthesis. Functionally, catalyzes the initial step of the lipid cycle reactions in the biosynthesis of the cell wall peptidoglycan: transfers peptidoglycan precursor phospho-MurNAc-pentapeptide from UDP-MurNAc-pentapeptide onto the lipid carrier undecaprenyl phosphate, yielding undecaprenyl-pyrophosphoryl-MurNAc-pentapeptide, known as lipid I. This chain is Phospho-N-acetylmuramoyl-pentapeptide-transferase, found in Salmonella agona (strain SL483).